Consider the following 280-residue polypeptide: UDP-3-O-acyl-N-acetylglucosamine deacetylase (280 aa).

Positions 79, 237, and 241 each coordinate Zn(2+). The Proton donor role is filled by His264.

This sequence belongs to the LpxC family. Zn(2+) is required as a cofactor.

It carries out the reaction a UDP-3-O-[(3R)-3-hydroxyacyl]-N-acetyl-alpha-D-glucosamine + H2O = a UDP-3-O-[(3R)-3-hydroxyacyl]-alpha-D-glucosamine + acetate. Its pathway is glycolipid biosynthesis; lipid IV(A) biosynthesis; lipid IV(A) from (3R)-3-hydroxytetradecanoyl-[acyl-carrier-protein] and UDP-N-acetyl-alpha-D-glucosamine: step 2/6. In terms of biological role, catalyzes the hydrolysis of UDP-3-O-myristoyl-N-acetylglucosamine to form UDP-3-O-myristoylglucosamine and acetate, the committed step in lipid A biosynthesis. In Chlamydia abortus (strain DSM 27085 / S26/3) (Chlamydophila abortus), this protein is UDP-3-O-acyl-N-acetylglucosamine deacetylase.